The sequence spans 332 residues: Thiosulfate-binding protein (332 aa).

The N-terminal stretch at 1–22 is a signal peptide; that stretch reads MKRLFSASLLAAGLALGGAAHA.

It belongs to the prokaryotic sulfate-binding protein family.

It localises to the periplasm. In terms of biological role, binds thiosulfate specifically and with high affinity. Has no detectable affinity for sulfate. The sequence is that of Thiosulfate-binding protein from Pseudomonas aeruginosa (strain ATCC 15692 / DSM 22644 / CIP 104116 / JCM 14847 / LMG 12228 / 1C / PRS 101 / PAO1).